Consider the following 248-residue polypeptide: Killer cell lectin-like receptor subfamily I member 1 (248 aa).

Residues Met-1–Arg-80 are Cytoplasmic-facing. 2 short sequence motifs (ITIM motif) span residues Val-16–Leu-21 and Leu-47–Leu-52. The helical; Signal-anchor for type II membrane protein transmembrane segment at Val-81–Leu-101 threads the bilayer. The Extracellular portion of the chain corresponds to Pro-102–Ile-248. Cystine bridges form between Cys-132–Cys-145, Cys-161–Cys-244, and Cys-223–Cys-236. The C-type lectin domain maps to Phe-139–Glu-245. Residues Asn-197, Asn-214, and Asn-220 are each glycosylated (N-linked (GlcNAc...) asparagine).

Heterodimer with KLRE1. Interacts with PTPN6. In terms of tissue distribution, expressed in natural killer (NK) cells.

Its subcellular location is the cell membrane. Functionally, lectin-like receptor for natural killer (NK) cells. Heterodimer formation with KLRE1 mediates inhibition of NK cell cytolytic activity. The chain is Killer cell lectin-like receptor subfamily I member 1 from Mus musculus (Mouse).